An 829-amino-acid polypeptide reads, in one-letter code: pre-rRNA 2'-O-ribose RNA methyltransferase FTSJ3 (829 aa).

The S-adenosyl-L-methionine site is built by glycine 56, tryptophan 58, aspartate 76, aspartate 92, and aspartate 117. The active-site Proton acceptor is lysine 157. Residues 332–367 (ISLSSEEEGDEEESAAETKQASEEEEEREEEEQLNR) are disordered. Residues serine 333, serine 335, serine 336, serine 345, and serine 353 each carry the phosphoserine modification. Positions 336 to 346 (SEEEGDEEESA) are enriched in acidic residues. Acidic residues predominate over residues 354 to 363 (EEEEEREEEE). Citrulline is present on arginine 389. Disordered stretches follow at residues 443–508 (FLSD…PLLV) and 528–634 (DGFS…GFEV). Residues 456–473 (DAEDDDDTSLESDLDPEE) are compositionally biased toward acidic residues. A phosphoserine mark is found at serine 531 and serine 544. Lysine 570 participates in a covalent cross-link: Glycyl lysine isopeptide (Lys-Gly) (interchain with G-Cter in SUMO2). Serine 575 bears the Phosphoserine mark. Residues lysine 626 and lysine 642 each participate in a glycyl lysine isopeptide (Lys-Gly) (interchain with G-Cter in SUMO2) cross-link. The residue at position 659 (serine 659) is a Phosphoserine. Lysine 661 is covalently cross-linked (Glycyl lysine isopeptide (Lys-Gly) (interchain with G-Cter in SUMO2)). Serine 671 carries the post-translational modification Phosphoserine. Lysine 693 participates in a covalent cross-link: Glycyl lysine isopeptide (Lys-Gly) (interchain with G-Cter in SUMO2). Residues 722 to 760 (IKKVAEAKARKKRRMLKKLEQTKKKAEAVVNTVDISERE) are a coiled coil. Arginine 766 carries the citrulline modification. Residues 794–804 (VRRPAGVRGHF) are compositionally biased toward basic residues. A disordered region spans residues 794–829 (VRRPAGVRGHFKVVDSRMKKDQRAQRKEQKRNHRRK). Positions 805-820 (KVVDSRMKKDQRAQRK) are enriched in basic and acidic residues.

It belongs to the class I-like SAM-binding methyltransferase superfamily. RNA methyltransferase RlmE family. SPB1 subfamily. As to quaternary structure, interacts with NIP7. In terms of processing, citrullinated by PADI4.

It localises to the nucleus. It is found in the nucleolus. The enzyme catalyses a ribonucleotide in rRNA + S-adenosyl-L-methionine = a 2'-O-methylribonucleotide in rRNA + S-adenosyl-L-homocysteine + H(+). RNA 2'-O-methyltransferase involved in the processing of the 34S pre-rRNA to 18S rRNA and in 40S ribosomal subunit formation. This Rattus norvegicus (Rat) protein is pre-rRNA 2'-O-ribose RNA methyltransferase FTSJ3 (Ftsj3).